Reading from the N-terminus, the 588-residue chain is Probable basic-leucine zipper transcription factor M (588 aa).

A coiled-coil region spans residues 127–157; that stretch reads QVEQQQEQEQEQEQQQKQQQQQYIEKQIQEI. The span at 221–240 shows a compositional bias: low complexity; sequence QQNHIDNQSLNNSNTKTSKN. The tract at residues 221–250 is disordered; it reads QQNHIDNQSLNNSNTKTSKNQQKDNNLPKK. A bZIP domain is found at 263-326; sequence NNNNIEKKRD…GSNLMRPEPE (64 aa). The interval 269–289 is basic motif; sequence KKRDQTESSKNFREKKKEYVK. The interval 291–312 is leucine-zipper; the sequence is IESKILALTLENDKLKKENDSL.

The protein belongs to the bZIP family.

The protein localises to the nucleus. In terms of biological role, probable transcriptional regulator. In Dictyostelium discoideum (Social amoeba), this protein is Probable basic-leucine zipper transcription factor M (bzpM).